The chain runs to 720 residues: Protein O-mannosyl-transferase 1 (720 aa).

A run of 8 helical transmembrane segments spans residues 7-27 (PVSVTVEINVLLLAVTALALF), 67-87 (FGHMILALGAYLGGFDGNFVW), 105-125 (LIPALAGSFCVPLAYLVVVEL), 127-147 (YSHFSALGACALLLMENSLIV), 150-170 (RFMLLESVLIFFLLLAVLSYL), 178-198 (SFFKWFWLVICGVSCAFGIGV), 201-221 (MGMFTYFLLLSLAAVHTWQLI), and 239-259 (FLALVVLPVIMYLGFFYIHLT). 3 consecutive MIR domains span residues 291–354 (PLDV…IKDP), 365–422 (PKPV…VDIV), and 426–486 (SEKE…VEEH). Transmembrane regions (helical) follow at residues 570–590 (IVTWTTGNITLVVYCLLFLTY), 609–629 (LVLAGVVCLGGWAVNYLPFFL), 633–653 (TLFLYHYLPALTFKILQIPIV), and 670–690 (AFGGVILAVLCSVYMSYHSLS).

The protein belongs to the glycosyltransferase 39 family. As to expression, widely expressed. Has particularly strong expression in testis, ovary, brain, liver and heart.

The protein resides in the endoplasmic reticulum membrane. It catalyses the reaction a di-trans,poly-cis-dolichyl beta-D-mannosyl phosphate + L-seryl-[protein] = 3-O-(alpha-D-mannosyl)-L-seryl-[protein] + a di-trans,poly-cis-dolichyl phosphate + H(+). The catalysed reaction is a di-trans,poly-cis-dolichyl beta-D-mannosyl phosphate + L-threonyl-[protein] = 3-O-(alpha-D-mannosyl)-L-threonyl-[protein] + a di-trans,poly-cis-dolichyl phosphate + H(+). The protein operates within protein modification; protein glycosylation. In terms of biological role, transfers mannosyl residues to the hydroxyl group of serine or threonine residues. Coexpression of both POMT1 and POMT2 is necessary for enzyme activity, expression of either POMT1 or POMT2 alone is insufficient. The polypeptide is Protein O-mannosyl-transferase 1 (Danio rerio (Zebrafish)).